The sequence spans 515 residues: Hyccin (515 aa).

Over residues 358 to 378 (STSQSALSNSSNTSSKNLLGK) the composition is skewed to low complexity. 2 disordered regions span residues 358–410 (STSQ…TQRA) and 491–515 (TDLPVLSKQPNQQRPPSISITLSTD). The span at 389–403 (AGREKEGETCREHLS) shows a compositional bias: basic and acidic residues. The segment covering 498–515 (KQPNQQRPPSISITLSTD) has biased composition (polar residues).

It belongs to the Hyccin family. As to quaternary structure, component of a phosphatidylinositol 4-kinase (PI4K) complex.

Its subcellular location is the cytoplasm. It localises to the cytosol. It is found in the cell membrane. Functionally, component of a complex required to localize phosphatidylinositol 4-kinase (PI4K) to the plasma membrane. The complex acts as a regulator of phosphatidylinositol 4-phosphate (PtdIns(4)P) synthesis. The protein is Hyccin (HYCC1) of Gallus gallus (Chicken).